The following is a 436-amino-acid chain: GTPase Obg (436 aa).

In terms of domain architecture, Obg spans 2-160; that stretch reads SMFLDTAKIK…RELQLELKIL (159 aa). In terms of domain architecture, OBG-type G spans 161 to 338; the sequence is ADVGLVGFPS…LLDATAELLD (178 aa). GTP is bound by residues 167–174, 192–196, 214–217, 284–287, and 319–321; these read GFPSVGKS, FTTIV, DLPG, NKMD, and SGL. Mg(2+) is bound by residues S174 and T194. The 79-residue stretch at 358 to 436 folds into the OCT domain; it reads GFDEEEKAFE…IGKFEFEFVD (79 aa).

It belongs to the TRAFAC class OBG-HflX-like GTPase superfamily. OBG GTPase family. As to quaternary structure, monomer. Mg(2+) is required as a cofactor.

The protein resides in the cytoplasm. In terms of biological role, an essential GTPase which binds GTP, GDP and possibly (p)ppGpp with moderate affinity, with high nucleotide exchange rates and a fairly low GTP hydrolysis rate. Plays a role in control of the cell cycle, stress response, ribosome biogenesis and in those bacteria that undergo differentiation, in morphogenesis control. The polypeptide is GTPase Obg (Streptococcus pneumoniae (strain CGSP14)).